We begin with the raw amino-acid sequence, 369 residues long: MYGILVLEDGTIIRGKGFGAEAEVLGELVFNTSMTGYVEILTDPSYNGQIVTMTYPLEGNYGVDKRWFESEGIKAEGFIVKDMTGIELDSFLKEYGVPGISDVDTRFITKKIRSKGVVKSLLKTSATEISEEEEKELVNKVRNYEDISDIDLVPEVSTKKVVKYPAKDEKISCVVIDCGVKQSILNCLLERGCSVVKVPYDTKEEEILSYNPDFVLVSNGPGDPEKMLETANTVKNLFGKLPVTGICLGHQIITIALGGKTYKLKFGHRGGNQPVKDSSTGKVYITSQNHGFATDMSNVPEGSILSHVNLNDDTVEGISKIMDSDNVKGVVWSVQHHPEAGPGPHDAMFLFDDMVALGMKFKQEKTSKR.

The CPSase stretch occupies residues 1 to 168 (MYGILVLEDG…KKVVKYPAKD (168 aa)). Positions 45, 220, and 222 each coordinate L-glutamine. Residues 172-364 (SCVVIDCGVK…VALGMKFKQE (193 aa)) form the Glutamine amidotransferase type-1 domain. Cysteine 247 (nucleophile) is an active-site residue. L-glutamine is bound by residues leucine 248, glutamine 251, asparagine 289, glycine 291, and phenylalanine 292. Active-site residues include histidine 337 and glutamate 339.

Belongs to the CarA family. Composed of two chains; the small (or glutamine) chain promotes the hydrolysis of glutamine to ammonia, which is used by the large (or ammonia) chain to synthesize carbamoyl phosphate. Tetramer of heterodimers (alpha,beta)4.

The catalysed reaction is hydrogencarbonate + L-glutamine + 2 ATP + H2O = carbamoyl phosphate + L-glutamate + 2 ADP + phosphate + 2 H(+). It catalyses the reaction L-glutamine + H2O = L-glutamate + NH4(+). Its pathway is amino-acid biosynthesis; L-arginine biosynthesis; carbamoyl phosphate from bicarbonate: step 1/1. It participates in pyrimidine metabolism; UMP biosynthesis via de novo pathway; (S)-dihydroorotate from bicarbonate: step 1/3. Its function is as follows. Small subunit of the glutamine-dependent carbamoyl phosphate synthetase (CPSase). CPSase catalyzes the formation of carbamoyl phosphate from the ammonia moiety of glutamine, carbonate, and phosphate donated by ATP, constituting the first step of 2 biosynthetic pathways, one leading to arginine and/or urea and the other to pyrimidine nucleotides. The small subunit (glutamine amidotransferase) binds and cleaves glutamine to supply the large subunit with the substrate ammonia. The sequence is that of Carbamoyl phosphate synthase small chain from Methanococcus vannielii (strain ATCC 35089 / DSM 1224 / JCM 13029 / OCM 148 / SB).